Here is a 466-residue protein sequence, read N- to C-terminus: 3-isopropylmalate dehydratase large subunit (466 aa).

Positions 346, 406, and 409 each coordinate [4Fe-4S] cluster.

It belongs to the aconitase/IPM isomerase family. LeuC type 1 subfamily. As to quaternary structure, heterodimer of LeuC and LeuD. Requires [4Fe-4S] cluster as cofactor.

It carries out the reaction (2R,3S)-3-isopropylmalate = (2S)-2-isopropylmalate. It functions in the pathway amino-acid biosynthesis; L-leucine biosynthesis; L-leucine from 3-methyl-2-oxobutanoate: step 2/4. Functionally, catalyzes the isomerization between 2-isopropylmalate and 3-isopropylmalate, via the formation of 2-isopropylmaleate. This Alteromonas mediterranea (strain DSM 17117 / CIP 110805 / LMG 28347 / Deep ecotype) protein is 3-isopropylmalate dehydratase large subunit.